A 153-amino-acid polypeptide reads, in one-letter code: 1,4-dihydroxy-2-naphthoyl-CoA hydrolase (153 aa).

D21 is an active-site residue.

This sequence belongs to the 4-hydroxybenzoyl-CoA thioesterase family. DHNA-CoA hydrolase subfamily.

The enzyme catalyses 1,4-dihydroxy-2-naphthoyl-CoA + H2O = 1,4-dihydroxy-2-naphthoate + CoA + H(+). It functions in the pathway cofactor biosynthesis; phylloquinone biosynthesis. It participates in quinol/quinone metabolism; 1,4-dihydroxy-2-naphthoate biosynthesis; 1,4-dihydroxy-2-naphthoate from chorismate: step 7/7. Its function is as follows. Catalyzes the hydrolysis of 1,4-dihydroxy-2-naphthoyl-CoA (DHNA-CoA) to 1,4-dihydroxy-2-naphthoate (DHNA), a reaction involved in phylloquinone (vitamin K1) biosynthesis. The polypeptide is 1,4-dihydroxy-2-naphthoyl-CoA hydrolase (Synechococcus sp. (strain WH7803)).